A 396-amino-acid chain; its full sequence is Elongation factor Tu 2 (396 aa).

In terms of domain architecture, tr-type G spans 10–206; sequence KPHVNIGTIG…AVDSYIPTPQ (197 aa). Positions 19 to 26 are G1; it reads GHVDHGKT. 19 to 26 contacts GTP; it reads GHVDHGKT. T26 contributes to the Mg(2+) binding site. The G2 stretch occupies residues 60 to 64; that stretch reads GITIS. A G3 region spans residues 81–84; it reads DCPG. Residues 81–85 and 136–139 contribute to the GTP site; these read DCPGH and NKVD. Positions 136-139 are G4; that stretch reads NKVD. The G5 stretch occupies residues 174–176; that stretch reads SAL.

It belongs to the TRAFAC class translation factor GTPase superfamily. Classic translation factor GTPase family. EF-Tu/EF-1A subfamily. As to quaternary structure, monomer.

It localises to the cytoplasm. It catalyses the reaction GTP + H2O = GDP + phosphate + H(+). In terms of biological role, GTP hydrolase that promotes the GTP-dependent binding of aminoacyl-tRNA to the A-site of ribosomes during protein biosynthesis. The polypeptide is Elongation factor Tu 2 (Myxococcus xanthus (strain DK1622)).